Reading from the N-terminus, the 27-residue chain is Natriuretic peptides A (27 aa).

An intrachain disulfide couples cysteine 7 to cysteine 23.

Belongs to the natriuretic peptide family.

The protein resides in the secreted. Hormone playing a key role in cardiovascular homeostasis through regulation of natriuresis, diuresis, and vasodilation. Has a cGMP-stimulating activity. In Anguilla japonica (Japanese eel), this protein is Natriuretic peptides A (nppa).